Reading from the N-terminus, the 295-residue chain is Pyridoxal 5'-phosphate synthase subunit PdxS (295 aa).

Residue D25 coordinates D-ribose 5-phosphate. K82 functions as the Schiff-base intermediate with D-ribose 5-phosphate in the catalytic mechanism. Position 154 (G154) interacts with D-ribose 5-phosphate. D-glyceraldehyde 3-phosphate is bound at residue R166. Residues G215 and 236 to 237 contribute to the D-ribose 5-phosphate site; that span reads GS.

The protein belongs to the PdxS/SNZ family. In terms of assembly, in the presence of PdxT, forms a dodecamer of heterodimers.

It carries out the reaction aldehydo-D-ribose 5-phosphate + D-glyceraldehyde 3-phosphate + L-glutamine = pyridoxal 5'-phosphate + L-glutamate + phosphate + 3 H2O + H(+). Its pathway is cofactor biosynthesis; pyridoxal 5'-phosphate biosynthesis. Catalyzes the formation of pyridoxal 5'-phosphate from ribose 5-phosphate (RBP), glyceraldehyde 3-phosphate (G3P) and ammonia. The ammonia is provided by the PdxT subunit. Can also use ribulose 5-phosphate and dihydroxyacetone phosphate as substrates, resulting from enzyme-catalyzed isomerization of RBP and G3P, respectively. This is Pyridoxal 5'-phosphate synthase subunit PdxS from Actinobacillus pleuropneumoniae serotype 3 (strain JL03).